A 173-amino-acid chain; its full sequence is Ribosome maturation factor RimP (173 aa).

The protein belongs to the RimP family.

It is found in the cytoplasm. Its function is as follows. Required for maturation of 30S ribosomal subunits. This chain is Ribosome maturation factor RimP, found in Chlorobium phaeobacteroides (strain DSM 266 / SMG 266 / 2430).